The following is a 631-amino-acid chain: 2-isopropylmalate synthase 2, chloroplastic (631 aa).

Residues 1–46 (MESSILKSPNLSSPSFGVPSIPALSSSSTSPFSSLHLRSQNHRTIS) constitute a chloroplast transit peptide. The region spanning 87-360 (VRIFDTTLRD…FTGIDTRHIV (274 aa)) is the Pyruvate carboxyltransferase domain. Residues Asp96, His293, and Asn329 each contribute to the a divalent metal cation site.

This sequence belongs to the alpha-IPM synthase/homocitrate synthase family. LeuA type 1 subfamily. As to quaternary structure, homotetramer. The cofactor is Mg(2+). Mn(2+) is required as a cofactor. As to expression, expressed in roots, stems, leaves, flowers and siliques.

The protein resides in the plastid. It is found in the chloroplast. The enzyme catalyses 3-methyl-2-oxobutanoate + acetyl-CoA + H2O = (2S)-2-isopropylmalate + CoA + H(+). It functions in the pathway amino-acid biosynthesis; L-leucine biosynthesis; L-leucine from 3-methyl-2-oxobutanoate: step 1/4. Feedback inhibition by Leu. Catalyzes the condensation of the acetyl group of acetyl-CoA with 3-methyl-2-oxobutanoate (2-oxoisovalerate) to form 3-carboxy-3-hydroxy-4-methylpentanoate (2-isopropylmalate). Involved in Leu biosynthesis, but does not participate in the chain elongation of glucosinolates. This is 2-isopropylmalate synthase 2, chloroplastic from Arabidopsis thaliana (Mouse-ear cress).